The sequence spans 179 residues: Large ribosomal subunit protein uL5 (179 aa).

Belongs to the universal ribosomal protein uL5 family. In terms of assembly, part of the 50S ribosomal subunit; part of the 5S rRNA/L5/L18/L25 subcomplex. Contacts the 5S rRNA and the P site tRNA. Forms a bridge to the 30S subunit in the 70S ribosome.

This is one of the proteins that bind and probably mediate the attachment of the 5S RNA into the large ribosomal subunit, where it forms part of the central protuberance. In the 70S ribosome it contacts protein S13 of the 30S subunit (bridge B1b), connecting the 2 subunits; this bridge is implicated in subunit movement. Contacts the P site tRNA; the 5S rRNA and some of its associated proteins might help stabilize positioning of ribosome-bound tRNAs. In Photobacterium profundum (strain SS9), this protein is Large ribosomal subunit protein uL5.